Reading from the N-terminus, the 21-residue chain is FPIEEDKIVGGYECPKHXVPW.

Positions 1 to 7 (FPIEEDK) are cleaved as a propeptide — activation peptide. In terms of domain architecture, Peptidase S1 spans 8–21 (IVGGYECPKHXVPW).

This sequence belongs to the peptidase S1 family.

The protein resides in the secreted. Its subcellular location is the extracellular space. The enzyme catalyses Preferential cleavage: Arg-|-Xaa, Lys-|-Xaa.. The sequence is that of Trypsin from Protopterus aethiopicus (Marbled lungfish).